The sequence spans 172 residues: Small ribosomal subunit protein uS5 (172 aa).

An S5 DRBM domain is found at 17–80 (LREKMISVNR…DEARRKMVKV (64 aa)).

It belongs to the universal ribosomal protein uS5 family. As to quaternary structure, part of the 30S ribosomal subunit. Contacts proteins S4 and S8.

Functionally, with S4 and S12 plays an important role in translational accuracy. Its function is as follows. Located at the back of the 30S subunit body where it stabilizes the conformation of the head with respect to the body. In Cupriavidus pinatubonensis (strain JMP 134 / LMG 1197) (Cupriavidus necator (strain JMP 134)), this protein is Small ribosomal subunit protein uS5.